Consider the following 314-residue polypeptide: tRNA pseudouridine synthase B (314 aa).

Histidine 43 contributes to the substrate binding site. Aspartate 48 acts as the Nucleophile in catalysis. Substrate is bound by residues tyrosine 76, tyrosine 179, and leucine 200.

This sequence belongs to the pseudouridine synthase TruB family. Type 1 subfamily.

The enzyme catalyses uridine(55) in tRNA = pseudouridine(55) in tRNA. Functionally, responsible for synthesis of pseudouridine from uracil-55 in the psi GC loop of transfer RNAs. The protein is tRNA pseudouridine synthase B of Salmonella arizonae (strain ATCC BAA-731 / CDC346-86 / RSK2980).